We begin with the raw amino-acid sequence, 259 residues long: 3-deoxy-manno-octulosonate cytidylyltransferase (259 aa).

Belongs to the KdsB family.

Its subcellular location is the cytoplasm. The catalysed reaction is 3-deoxy-alpha-D-manno-oct-2-ulosonate + CTP = CMP-3-deoxy-beta-D-manno-octulosonate + diphosphate. It functions in the pathway nucleotide-sugar biosynthesis; CMP-3-deoxy-D-manno-octulosonate biosynthesis; CMP-3-deoxy-D-manno-octulosonate from 3-deoxy-D-manno-octulosonate and CTP: step 1/1. It participates in bacterial outer membrane biogenesis; lipopolysaccharide biosynthesis. Functionally, activates KDO (a required 8-carbon sugar) for incorporation into bacterial lipopolysaccharide in Gram-negative bacteria. The protein is 3-deoxy-manno-octulosonate cytidylyltransferase of Xanthomonas axonopodis pv. citri (strain 306).